The following is a 177-amino-acid chain: Translation initiation factor IF-3 (177 aa).

It belongs to the IF-3 family. In terms of assembly, monomer.

The protein resides in the cytoplasm. IF-3 binds to the 30S ribosomal subunit and shifts the equilibrium between 70S ribosomes and their 50S and 30S subunits in favor of the free subunits, thus enhancing the availability of 30S subunits on which protein synthesis initiation begins. The chain is Translation initiation factor IF-3 from Nostoc punctiforme (strain ATCC 29133 / PCC 73102).